Here is a 215-residue protein sequence, read N- to C-terminus: Small ribosomal subunit protein uS2 (215 aa).

The protein belongs to the universal ribosomal protein uS2 family.

This chain is Small ribosomal subunit protein uS2, found in Caldivirga maquilingensis (strain ATCC 700844 / DSM 13496 / JCM 10307 / IC-167).